Consider the following 420-residue polypeptide: UDP-N-acetylglucosamine 1-carboxyvinyltransferase (420 aa).

22–23 (KN) lines the phosphoenolpyruvate pocket. Arg-92 is a UDP-N-acetyl-alpha-D-glucosamine binding site. Catalysis depends on Cys-116, which acts as the Proton donor. Cys-116 carries the 2-(S-cysteinyl)pyruvic acid O-phosphothioketal modification. Residues 121-125 (RPIDL), Asp-307, and Leu-329 each bind UDP-N-acetyl-alpha-D-glucosamine.

This sequence belongs to the EPSP synthase family. MurA subfamily.

Its subcellular location is the cytoplasm. The catalysed reaction is phosphoenolpyruvate + UDP-N-acetyl-alpha-D-glucosamine = UDP-N-acetyl-3-O-(1-carboxyvinyl)-alpha-D-glucosamine + phosphate. The protein operates within cell wall biogenesis; peptidoglycan biosynthesis. Functionally, cell wall formation. Adds enolpyruvyl to UDP-N-acetylglucosamine. In Nitratiruptor sp. (strain SB155-2), this protein is UDP-N-acetylglucosamine 1-carboxyvinyltransferase.